The primary structure comprises 633 residues: Uracil permease (633 aa).

A run of 12 helical transmembrane segments spans residues 143 to 163 (WWQC…FVVL), 173 to 193 (LSFP…WPVI), 197 to 217 (VMAI…VSLM), 242 to 262 (YEFM…LVPP), 268 to 288 (LFTV…IWAI), 310 to 330 (FSWA…TMVI), 350 to 370 (LVCI…VTAA), 400 to 420 (AGVF…NISA), 442 to 462 (GSLF…MATS), 465 to 485 (FTMA…VVCS), 521 to 541 (ALAA…AEVG), and 559 to 579 (YWVG…FFPV).

The protein belongs to the purine-cytosine permease (2.A.39) family. Post-translationally, glycosylated (possible); but there is not yet direct biochemical evidence for it.

Its subcellular location is the membrane. Its function is as follows. Transport of uracil. This Saccharomyces cerevisiae (strain ATCC 204508 / S288c) (Baker's yeast) protein is Uracil permease (FUR4).